Consider the following 586-residue polypeptide: 2-succinyl-5-enolpyruvyl-6-hydroxy-3-cyclohexene-1-carboxylate synthase (586 aa).

It belongs to the TPP enzyme family. MenD subfamily. In terms of assembly, homodimer. Mg(2+) serves as cofactor. Requires Mn(2+) as cofactor. It depends on thiamine diphosphate as a cofactor.

The catalysed reaction is isochorismate + 2-oxoglutarate + H(+) = 5-enolpyruvoyl-6-hydroxy-2-succinyl-cyclohex-3-ene-1-carboxylate + CO2. Its pathway is quinol/quinone metabolism; 1,4-dihydroxy-2-naphthoate biosynthesis; 1,4-dihydroxy-2-naphthoate from chorismate: step 2/7. The protein operates within cofactor biosynthesis; phylloquinone biosynthesis. Its function is as follows. Catalyzes the thiamine diphosphate-dependent decarboxylation of 2-oxoglutarate and the subsequent addition of the resulting succinic semialdehyde-thiamine pyrophosphate anion to isochorismate to yield 2-succinyl-5-enolpyruvyl-6-hydroxy-3-cyclohexene-1-carboxylate (SEPHCHC). This Acaryochloris marina (strain MBIC 11017) protein is 2-succinyl-5-enolpyruvyl-6-hydroxy-3-cyclohexene-1-carboxylate synthase.